The following is a 181-amino-acid chain: Putative manganese efflux pump MntP (181 aa).

Helical transmembrane passes span 5 to 25 (LIALLIMASALGMDAFSIALG), 36 to 56 (MFKVGLTIGVFHVIMPLMGMV), 66 to 86 (GLFANWLGAGLLLWLGLVMIV), 102 to 122 (IGLFVFALSVSLDSLSAGLSL), 130 to 150 (ALAVVAMGVMSTVLSWLGLFI), and 158 to 178 (VGPYSELLGGFILCGFGVKLL).

This sequence belongs to the MntP (TC 9.B.29) family.

The protein localises to the cell membrane. Its function is as follows. Probably functions as a manganese efflux pump. The protein is Putative manganese efflux pump MntP of Halalkalibacterium halodurans (strain ATCC BAA-125 / DSM 18197 / FERM 7344 / JCM 9153 / C-125) (Bacillus halodurans).